The primary structure comprises 217 residues: tRNA (guanine-N(7)-)-methyltransferase (217 aa).

The S-adenosyl-L-methionine site is built by glutamate 44, aspartate 69, aspartate 96, and aspartate 118. Aspartate 118 is an active-site residue. Lysine 122 serves as a coordination point for substrate. The interval 124 to 129 (RHEKRR) is interaction with RNA. Substrate is bound by residues aspartate 154 and 193-196 (TEYE).

It belongs to the class I-like SAM-binding methyltransferase superfamily. TrmB family.

The catalysed reaction is guanosine(46) in tRNA + S-adenosyl-L-methionine = N(7)-methylguanosine(46) in tRNA + S-adenosyl-L-homocysteine. The protein operates within tRNA modification; N(7)-methylguanine-tRNA biosynthesis. Functionally, catalyzes the formation of N(7)-methylguanine at position 46 (m7G46) in tRNA. The chain is tRNA (guanine-N(7)-)-methyltransferase from Lactococcus lactis subsp. cremoris (strain SK11).